We begin with the raw amino-acid sequence, 337 residues long: Cholinesterase 2 (337 aa).

Catalysis depends on S99, which acts as the Acyl-ester intermediate. C153 and C165 are joined by a disulfide. The Charge relay system role is filled by E224. An N-linked (GlcNAc...) asparagine glycan is attached at N290.

It belongs to the type-B carboxylesterase/lipase family.

It catalyses the reaction an acylcholine + H2O = a carboxylate + choline + H(+). This Branchiostoma lanceolatum (Common lancelet) protein is Cholinesterase 2 (CHE2).